The chain runs to 165 residues: MSVATGSSETAGGASGGGARVFFQSPRGGAGGSPGSSSGSGSSREDSAPVATAAAAGQVQQQQQRRHQQGKVTVKYDRKELRKRLVLEEWIVEQLGQLYGCEEEEMPEVEIDIDDLLDADSDEERASKLQEALVDCYKPTEEFIKELLSRIRGMRKLSPPQKKSV.

Residues 1–12 (MSVATGSSETAG) are compositionally biased toward low complexity. Residues 1–73 (MSVATGSSET…QRRHQQGKVT (73 aa)) are disordered. Residue Ser2 is modified to N-acetylserine. Ser25 bears the Phosphoserine mark. Omega-N-methylarginine is present on Arg27. Ser33 is subject to Phosphoserine. Low complexity predominate over residues 35–63 (GSSSGSGSSREDSAPVATAAAAGQVQQQQ). Thr73 bears the Phosphothreonine; by ILK1 mark.

Belongs to the PP1 inhibitor family. Post-translationally, has over 600-fold higher inhibitory activity when phosphorylated, creating a molecular switch for regulating the phosphorylation status of PPP1CA substrates and smooth muscle contraction. The main inhibitory site appears to be Thr-73. In terms of tissue distribution, detected in breast cancer.

The protein localises to the cytoplasm. Its subcellular location is the membrane. Functionally, inhibitor of the PP1 regulatory subunit PPP1CA. The sequence is that of Protein phosphatase 1 regulatory subunit 14C (PPP1R14C) from Homo sapiens (Human).